We begin with the raw amino-acid sequence, 861 residues long: MTPKLGQKKRHRITVVCTNCKKRKSKCDRTKPCGTCVRLGDVDSCVYLIDSSGQPESSPSLNDADPLRKQSTPAERISPGFIKKRRSSQTRQDEDHWQRVRELESQSSLYYLPIHEETPFFIDLIPNGFYLETKRSADNLFGLFSDRAIENRDPYLQAMVTFRSIAIKKMMDKLGSNGNNVKNGSLPKSFEALSTFDADDERHISDDVVDKGNNCRMHQTIHKSLFNKFAQYRENNAKKFSSETILAKDYLPPLKILESEVLALFEEKIYNMIPIFDMKILRHEITIFYQNIVEKGNPISIKHYDHMVFCIILLIIKICRLSVQFSKLTPYIYPVLQEIDTSKFLALVKHYLFETKVLRKCNLLQLQCLILLRFLHWCAPEDGDGPETQYCQILMGTIISSCKEMGINWYCFSHPEKYSFKINRHTRPSYDIMKPSDYISVFRKIWSYVLFWDRKMCFISGEECQIGKTLQCHFKEEADTPTWYIRMLTLDNLMKKINDTLNDDPGKVDLNLLHRLINDLKRNFHILKSLSKNEKETMRHFDFEMEWIIDLFSLSLLHGEMIFYEYDCNITKFYKSFQDLWDMVIHISEKCYNYFFNSDALEVDSLTKFYTNRIVEIVANKVLVIVPAFILRGDRFKTIQYADKKKMIEFLYGVSSVYFNEFGFEYYRCFRKMFTAKIAYKILNRSCEKDAWRIILNFLLNELKLEDNGDSYIDYNDMRLKDICPIILEFQETVQKYDGYRPDILSIWNNEFYPIGKYNDDMTGFKFQMRIKEMQEFLDMEKYSDRFNIFSSFYDHASSQLAKHTEVDTNISITNEQVAETPQKELLQQPLAPALPVNDLIVSEFDVIEDIFDPVDFVSFF.

A DNA-binding region (zn(2)-C6 fungal-type) is located at residues 19 to 47 (NCKKRKSKCDRTKPCGTCVRLGDVDSCVY). A compositionally biased stretch (polar residues) spans 52-61 (SGQPESSPSL). The interval 52–99 (SGQPESSPSLNDADPLRKQSTPAERISPGFIKKRRSSQTRQDEDHWQR) is disordered.

Belongs to the OAF3 family.

It is found in the cytoplasm. The protein resides in the nucleus. It localises to the mitochondrion. Functionally, transcriptional inhibitor with a significantly increased number of target genes in response to oleate. This Saccharomyces cerevisiae (strain JAY291) (Baker's yeast) protein is Oleate activated transcription factor 3 (OAF3).